A 242-amino-acid polypeptide reads, in one-letter code: Probable transcriptional regulatory protein XCV3282 (242 aa).

This sequence belongs to the TACO1 family.

The protein resides in the cytoplasm. This chain is Probable transcriptional regulatory protein XCV3282, found in Xanthomonas euvesicatoria pv. vesicatoria (strain 85-10) (Xanthomonas campestris pv. vesicatoria).